The following is a 217-amino-acid chain: tRNA (guanine-N(7)-)-methyltransferase (217 aa).

S-adenosyl-L-methionine-binding residues include Glu44, Glu69, Asp96, and Asp118. The active site involves Asp118. Substrate contacts are provided by residues Lys122, Asp154, and 191–194 (TEYE).

This sequence belongs to the class I-like SAM-binding methyltransferase superfamily. TrmB family.

It catalyses the reaction guanosine(46) in tRNA + S-adenosyl-L-methionine = N(7)-methylguanosine(46) in tRNA + S-adenosyl-L-homocysteine. Its pathway is tRNA modification; N(7)-methylguanine-tRNA biosynthesis. Catalyzes the formation of N(7)-methylguanine at position 46 (m7G46) in tRNA. The chain is tRNA (guanine-N(7)-)-methyltransferase from Bacillus thuringiensis (strain Al Hakam).